A 1827-amino-acid polypeptide reads, in one-letter code: Chromodomain-helicase-DNA-binding protein 2 (1827 aa).

The segment covering 1–14 (MMRNKDKSQEEDSS) has biased composition (basic and acidic residues). Residues 1–264 (MMRNKDKSQE…EQQDNSETIE (264 aa)) are disordered. A compositionally biased stretch (low complexity) spans 15–75 (LHSNASSRSA…SESESAGSKS (61 aa)). Basic and acidic residues-rich tracts occupy residues 81 to 101 (EAKE…KMWE), 115 to 128 (SRQE…KEEA), and 146 to 155 (KKQEKWKQDP). Residues 175 to 204 (GKARRPVPRRTVPKPQVKKQPKIQRGKRKK) show a composition bias toward basic residues. Phosphoserine is present on residues Ser207 and Ser208. Acidic residues predominate over residues 234–258 (EDDDFETDSDDLIEMTGEGGDEQQD). Residue Thr240 is modified to Phosphothreonine. Residue Ser242 is modified to Phosphoserine. 2 consecutive Chromo domains span residues 261–353 (ETIE…QWLG) and 378–456 (QIVE…IPTR). The 171-residue stretch at 496-666 (AHSWCKSNSV…WSLLHFIMPE (171 aa)) folds into the Helicase ATP-binding domain. Position 509–516 (509–516 (DEMGLGKT)) interacts with ATP. Positions 617 to 620 (DEAH) match the DEAH box motif. The region spanning 795–946 (LLDKLLTRLR…HLVIQRMDTT (152 aa)) is the Helicase C-terminal domain. Disordered regions lie at residues 1030–1124 (EDEE…RSVR), 1329–1465 (GTVA…DDLD), 1556–1638 (HKKR…ADRG), and 1679–1827 (HMDA…VRKT). The span at 1037-1065 (ERPHKDWDEIIPEEQRKKVEEEERQKELE) shows a compositional bias: basic and acidic residues. Phosphoserine occurs at positions 1085, 1087, 1365, and 1386. A compositionally biased stretch (basic and acidic residues) spans 1347–1371 (KKENKAPRLKDEHGLEPASPRHSDN). Composition is skewed to basic and acidic residues over residues 1396 to 1431 (ENKE…KGGD) and 1565 to 1574 (EQKKKDDSLG). The CHD1 helical C-terminal domain (CHCT) stretch occupies residues 1464–1566 (LDQETFSICK…KKRSQEEEEQ (103 aa)). Residues 1584–1601 (SGSSRDSLISQSHTSHNL) are compositionally biased toward polar residues. Basic and acidic residues-rich tracts occupy residues 1697–1719 (RPYE…DRHH), 1738–1748 (QDFRRMSDHRP), 1759–1771 (DHYR…KLGE), and 1794–1813 (SPHD…RSLE). Phosphoserine is present on Ser1806.

Interacts with MYOD1. Interacts with histone H3.3. Widely expressed.

The protein resides in the nucleus. The enzyme catalyses ATP + H2O = ADP + phosphate + H(+). Functionally, ATP-dependent chromatin-remodeling factor that specifically binds to the promoter of target genes, leading to chromatin remodeling, possibly by promoting deposition of histone H3.3. Involved in myogenesis via interaction with MYOD1: binds to myogenic gene regulatory sequences and mediates incorporation of histone H3.3 prior to the onset of myogenic gene expression, promoting their expression. This chain is Chromodomain-helicase-DNA-binding protein 2 (Chd2), found in Mus musculus (Mouse).